The following is a 121-amino-acid chain: Large ribosomal subunit protein bL20 (121 aa).

It belongs to the bacterial ribosomal protein bL20 family.

Functionally, binds directly to 23S ribosomal RNA and is necessary for the in vitro assembly process of the 50S ribosomal subunit. It is not involved in the protein synthesizing functions of that subunit. The protein is Large ribosomal subunit protein bL20 of Wolbachia sp. subsp. Drosophila simulans (strain wRi).